The sequence spans 739 residues: Poly(A) polymerase alpha (739 aa).

The segment covering 1 to 17 has biased composition (low complexity); it reads MPFPVTTQGSQQTQPPQ. The disordered stretch occupies residues 1–23; sequence MPFPVTTQGSQQTQPPQKHYGIT. A phosphoserine mark is found at Ser-10 and Ser-24. Residues 100 to 102, Thr-109, 113 to 115, Asp-167, Lys-228, Tyr-237, and 246 to 247 each bind ATP; these read FGS, DID, and GV. Residues Asp-113, Asp-115, and Asp-167 each coordinate Mg(2+). Residues Lys-444, Lys-445, Lys-506, and Lys-507 each participate in a glycyl lysine isopeptide (Lys-Gly) (interchain with G-Cter in SUMO) cross-link. The Nuclear localization signal 1 motif lies at 490–507; the sequence is RKQLHQLLPSHVLQKKKK. 2 disordered regions span residues 501–565 and 580–700; these read VLQK…AVTA and QINS…TIQT. Positions 508 to 643 are ser/Thr-rich; the sequence is HSTEGVKLTP…AKIPNPIVGV (136 aa). The segment covering 518–534 has biased composition (low complexity); sequence LNDSSLDLSMDSDNSMS. The segment covering 535–557 has biased composition (polar residues); it reads VPSPTSAMKTSPLNSSGSSQGRN. Residue Ser-537 is modified to Phosphoserine; by MAPK. The residue at position 558 (Ser-558) is a Phosphoserine. Residues 583–594 show a composition bias toward low complexity; it reads SSESSGGTSSES. Polar residues predominate over residues 595 to 604; sequence IPQTATQPAI. Low complexity predominate over residues 611–620; sequence TVSRVVSSTR. Residues Lys-635 and Lys-644 each carry the N6-acetyllysine modification. The Nuclear localization signal 2 motif lies at 644–659; that stretch reads KRTSSPHKEESPKKTK. 2 stretches are compositionally biased toward basic and acidic residues: residues 649–660 and 676–686; these read PHKEESPKKTKT and GHDKTETKEQL. The tract at residues 671–739 is required for interaction with NUDT21; that stretch reads CLALSGHDKT…KNSIKLRLNR (69 aa). Residues 688 to 700 are compositionally biased toward low complexity; the sequence is TETSTTQSETIQT. Lys-730 carries the N6-acetyllysine; alternate modification. A Glycyl lysine isopeptide (Lys-Gly) (interchain with G-Cter in SUMO); alternate cross-link involves residue Lys-730. Position 732 is a phosphoserine (Ser-732). At Lys-734 the chain carries N6-acetyllysine; alternate. Lys-734 participates in a covalent cross-link: Glycyl lysine isopeptide (Lys-Gly) (interchain with G-Cter in SUMO); alternate.

Belongs to the poly(A) polymerase family. In terms of assembly, monomer. Found in a complex with CPSF1, FIP1L1 and PAPOLA. Interacts with AHCYL1 and FIP1L1; the interaction with AHCYL1 seems to increase interaction with FIP1L1. Interacts with NUDT21; the interaction is diminished by acetylation. Interacts with KPNB1; the interaction promotes PAP nuclear import and is inhibited by acetylation of PAP. Mg(2+) is required as a cofactor. The cofactor is Mn(2+). In terms of processing, polysumoylated. Varying sumoylation depending on tissue- and cell-type. Highly sumoylated in bladder and NIH 3T3 cells. Sumoylation is required for nuclear localization and enhances PAP stability. Desumoylated by SENP1. Inhibits polymerase activity. Hyperphosphorylation on multiple CDK2 consensus and non-consensus sites in the C-terminal Ser/Thr-rich region represses PAP activity in late M-phase. Phosphorylation/dephosphorylation may regulate the interaction between PAP and CPSF. Post-translationally, acetylated in the C-terminus. Acetylation decreases interaction with NUDT21 and KPNB1, and inhibits nuclear localization through inhibiting binding to the importin alpha/beta complex.

The protein localises to the nucleus. It carries out the reaction RNA(n) + ATP = RNA(n)-3'-adenine ribonucleotide + diphosphate. In terms of biological role, polymerase that creates the 3'-poly(A) tail of mRNA's. Also required for the endoribonucleolytic cleavage reaction at some polyadenylation sites. May acquire specificity through interaction with a cleavage and polyadenylation specificity factor (CPSF) at its C-terminus. The protein is Poly(A) polymerase alpha (PAPOLA) of Bos taurus (Bovine).